The chain runs to 320 residues: MAVVLDLLANDARPRHPEKAHRPDQPIQRKPDWIRVRAPGSPGWAETNRIVREHGLVTVCEEAGCPNIGECWEKKHATFMIMGDTCTRACAFCNVRTGLPQGLDGDEPARVADAVARLGLSHVVITSVDRDDLRDGGAGHFAAVIGAIRQASPGTTIEVLTPDFLRKEGALDVVVAAKPDVFNHNLETVPSKYLTVRPGARYFHSVRLLQRVKELDPTMFTKSGIMVGLGEERNEVLQLMDDLRSAEVDFLTIGQYLQPTKKHHPVKRFVPPDEFRAYETTAYAKGFLLVSATPLTRSSHHAGADFARLKQARLDRLATA.

Residues 9-31 form a disordered region; it reads ANDARPRHPEKAHRPDQPIQRKP. The segment covering 12 to 31 has biased composition (basic and acidic residues); the sequence is ARPRHPEKAHRPDQPIQRKP. [4Fe-4S] cluster is bound by residues Cys-60, Cys-65, Cys-71, Cys-86, Cys-90, Cys-93, and Ser-299. The region spanning 72 to 288 is the Radical SAM core domain; it reads WEKKHATFMI…ETTAYAKGFL (217 aa).

The protein belongs to the radical SAM superfamily. Lipoyl synthase family. [4Fe-4S] cluster serves as cofactor.

The protein resides in the cytoplasm. The catalysed reaction is [[Fe-S] cluster scaffold protein carrying a second [4Fe-4S](2+) cluster] + N(6)-octanoyl-L-lysyl-[protein] + 2 oxidized [2Fe-2S]-[ferredoxin] + 2 S-adenosyl-L-methionine + 4 H(+) = [[Fe-S] cluster scaffold protein] + N(6)-[(R)-dihydrolipoyl]-L-lysyl-[protein] + 4 Fe(3+) + 2 hydrogen sulfide + 2 5'-deoxyadenosine + 2 L-methionine + 2 reduced [2Fe-2S]-[ferredoxin]. Its pathway is protein modification; protein lipoylation via endogenous pathway; protein N(6)-(lipoyl)lysine from octanoyl-[acyl-carrier-protein]: step 2/2. Catalyzes the radical-mediated insertion of two sulfur atoms into the C-6 and C-8 positions of the octanoyl moiety bound to the lipoyl domains of lipoate-dependent enzymes, thereby converting the octanoylated domains into lipoylated derivatives. The sequence is that of Lipoyl synthase from Methylobacterium nodulans (strain LMG 21967 / CNCM I-2342 / ORS 2060).